Here is a 502-residue protein sequence, read N- to C-terminus: Lysine--tRNA ligase (502 aa).

Positions 412 and 419 each coordinate Mg(2+).

The protein belongs to the class-II aminoacyl-tRNA synthetase family. In terms of assembly, homodimer. Mg(2+) is required as a cofactor.

The protein localises to the cytoplasm. It catalyses the reaction tRNA(Lys) + L-lysine + ATP = L-lysyl-tRNA(Lys) + AMP + diphosphate. This chain is Lysine--tRNA ligase, found in Histophilus somni (strain 2336) (Haemophilus somnus).